Consider the following 347-residue polypeptide: GTPase Obg (347 aa).

The Obg domain maps to 1 to 159 (MQFLDQAKIY…AWVWLRLKLL (159 aa)). A disordered region spans residues 124–144 (GRGNASYKSSTNRAPRQHGPG). In terms of domain architecture, OBG-type G spans 160–327 (ADVGLVGLPN…ILDQLITMTG (168 aa)). GTP is bound by residues 166–173 (GLPNAGKS), 191–195 (FTTLH), 212–215 (DIPG), 279–282 (NKID), and 308–310 (SGA). Residues Ser-173 and Thr-193 each coordinate Mg(2+).

It belongs to the TRAFAC class OBG-HflX-like GTPase superfamily. OBG GTPase family. In terms of assembly, monomer. The cofactor is Mg(2+).

Its subcellular location is the cytoplasm. Its function is as follows. An essential GTPase which binds GTP, GDP and possibly (p)ppGpp with moderate affinity, with high nucleotide exchange rates and a fairly low GTP hydrolysis rate. Plays a role in control of the cell cycle, stress response, ribosome biogenesis and in those bacteria that undergo differentiation, in morphogenesis control. The polypeptide is GTPase Obg (Zymomonas mobilis subsp. mobilis (strain ATCC 31821 / ZM4 / CP4)).